Here is a 260-residue protein sequence, read N- to C-terminus: Thrombin-like enzyme flavoxobin (260 aa).

Positions 1–18 (MVLIRVLANLLILQLSYA) are cleaved as a signal peptide. Positions 19 to 24 (QKSSEL) are excised as a propeptide. The Peptidase S1 domain maps to 25–251 (VIGGDECNIN…YNAWIQSIIA (227 aa)). Cystine bridges form between cysteine 31–cysteine 165, cysteine 52–cysteine 68, cysteine 100–cysteine 258, cysteine 144–cysteine 212, cysteine 176–cysteine 191, and cysteine 202–cysteine 227. Residues histidine 67 and aspartate 112 each act as charge relay system in the active site. Serine 206 serves as the catalytic Charge relay system.

Belongs to the peptidase S1 family. Snake venom subfamily. As to quaternary structure, monomer. Expressed by the venom gland.

The protein resides in the secreted. The catalysed reaction is Selective cleavage of Arg-|-Xaa bond in fibrinogen, to form fibrin, and release fibrinopeptide A. The specificity of further degradation of fibrinogen varies with species origin of the enzyme.. Its activity is regulated as follows. Inhibited by alpha(2)-macroglobulin, diisopropylfluorophosphate (DFP) and PMSF. Low inhibition by tosyl-L-lysine chloromethyl ketone. Thrombin-like snake venom serine protease that clots fibrinogen (FGA) by releasing fibrinopeptide A. According to PubMed:8585090, only cleaves rabbit fibrinogen, whereas no specificity is described in PubMed:3910643 (tests done on bovine fibrinogen). Also acts as a C3 convertase that independently cleaves human C3 and kick-starts the complement cascade. Also increases urokinase-type plasminogen activator (PLAU) and plasminogen activator inhibitor (SERPINE1) in cultured bovine pulmonary artery endothelial cells. Dose-dependently inhibits collagen-induced platelet aggregation. The sequence is that of Thrombin-like enzyme flavoxobin (TLF1) from Protobothrops flavoviridis (Habu).